The chain runs to 289 residues: Urease accessory protein UreD (289 aa).

It belongs to the UreD family. In terms of assembly, ureD, UreF and UreG form a complex that acts as a GTP-hydrolysis-dependent molecular chaperone, activating the urease apoprotein by helping to assemble the nickel containing metallocenter of UreC. The UreE protein probably delivers the nickel.

It is found in the cytoplasm. Required for maturation of urease via the functional incorporation of the urease nickel metallocenter. The chain is Urease accessory protein UreD from Cupriavidus pinatubonensis (strain JMP 134 / LMG 1197) (Cupriavidus necator (strain JMP 134)).